The primary structure comprises 48 residues: Large ribosomal subunit protein eL40 (48 aa).

It belongs to the eukaryotic ribosomal protein eL40 family.

This chain is Large ribosomal subunit protein eL40, found in Methanosphaerula palustris (strain ATCC BAA-1556 / DSM 19958 / E1-9c).